Reading from the N-terminus, the 632-residue chain is X-ray repair cross-complementing protein 5 (632 aa).

Arginine 52 (schiff-base intermediate with DNA; for 5'-deoxyribose-5-phosphate lyase activity) is an active-site residue. Residues 283-490 (LYLNKDLSFS…VDKMKGIIQK (208 aa)) enclose the Ku domain. The tract at residues 555–578 (DYSPEGKAAKRKQAGDAQAEKRPK) is disordered. The SAP domain maps to 595–629 (LGKLTVSALKDTCRHYGLRSGGKKQELIDALTEYF).

This sequence belongs to the ku70 family. As to quaternary structure, heterodimer composed of XRCC5/Ku80 and XRCC6/Ku70. Component of the core long-range non-homologous end joining (NHEJ) complex (also named DNA-PK complex) composed of PRKDC, LIG4, XRCC4, XRCC6/Ku70, XRCC5/Ku86 and NHEJ1/XLF. Additional component of the NHEJ complex includes PAXX. Following autophosphorylation, PRKDC dissociates from DNA, leading to formation of the short-range NHEJ complex, composed of LIG4, XRCC4, XRCC6/Ku70, XRCC5/Ku86 and NHEJ1/XLF. Phosphorylated on serine residues.

The protein localises to the nucleus. The protein resides in the chromosome. Functionally, single-stranded DNA-dependent ATP-dependent helicase that plays a key role in DNA non-homologous end joining (NHEJ) by recruiting DNA-PK to DNA. Required for double-strand break repair and V(D)J recombination. Also has a role in chromosome translocation. Has a role in chromosome translocation. The DNA helicase II complex binds preferentially to fork-like ends of double-stranded DNA in a cell cycle-dependent manner. It works in the 3'-5' direction. During NHEJ, the XRCC5-XRRC6 dimer performs the recognition step: it recognizes and binds to the broken ends of the DNA and protects them from further resection. Binding to DNA may be mediated by XRCC6. The XRCC5-XRRC6 dimer acts as a regulatory subunit of the DNA-dependent protein kinase complex DNA-PK by increasing the affinity of the catalytic subunit PRKDC to DNA by 100-fold. The XRCC5-XRRC6 dimer is probably involved in stabilizing broken DNA ends and bringing them together. The assembly of the DNA-PK complex to DNA ends is required for the NHEJ ligation step. Probably also acts as a 5'-deoxyribose-5-phosphate lyase (5'-dRP lyase), by catalyzing the beta-elimination of the 5' deoxyribose-5-phosphate at an abasic site near double-strand breaks. 5'-dRP lyase activity allows to 'clean' the termini of abasic sites, a class of nucleotide damage commonly associated with strand breaks, before such broken ends can be joined. The XRCC5-XRRC6 dimer together with APEX1 acts as a negative regulator of transcription. The polypeptide is X-ray repair cross-complementing protein 5 (XRCC6) (Gallus gallus (Chicken)).